A 152-amino-acid chain; its full sequence is Xanthine-guanine phosphoribosyltransferase (152 aa).

5-phospho-alpha-D-ribose 1-diphosphate is bound by residues 37-38, R69, and 88-96; these read RG and DDLVDSGDT. A GMP-binding site is contributed by R69. D89 is a Mg(2+) binding site. D92 and I135 together coordinate guanine. Residues D92 and I135 each coordinate xanthine. GMP contacts are provided by residues 92–96 and 134–135; these read DSGDT and WI.

This sequence belongs to the purine/pyrimidine phosphoribosyltransferase family. XGPT subfamily. As to quaternary structure, homotetramer. It depends on Mg(2+) as a cofactor.

The protein resides in the cell inner membrane. It catalyses the reaction GMP + diphosphate = guanine + 5-phospho-alpha-D-ribose 1-diphosphate. The enzyme catalyses XMP + diphosphate = xanthine + 5-phospho-alpha-D-ribose 1-diphosphate. The catalysed reaction is IMP + diphosphate = hypoxanthine + 5-phospho-alpha-D-ribose 1-diphosphate. It functions in the pathway purine metabolism; GMP biosynthesis via salvage pathway; GMP from guanine: step 1/1. The protein operates within purine metabolism; XMP biosynthesis via salvage pathway; XMP from xanthine: step 1/1. Purine salvage pathway enzyme that catalyzes the transfer of the ribosyl-5-phosphate group from 5-phospho-alpha-D-ribose 1-diphosphate (PRPP) to the N9 position of the 6-oxopurines guanine and xanthine to form the corresponding ribonucleotides GMP (guanosine 5'-monophosphate) and XMP (xanthosine 5'-monophosphate), with the release of PPi. To a lesser extent, also acts on hypoxanthine. The chain is Xanthine-guanine phosphoribosyltransferase from Aliivibrio fischeri (strain ATCC 700601 / ES114) (Vibrio fischeri).